The sequence spans 505 residues: Lysine--tRNA ligase (505 aa).

The Mg(2+) site is built by E415 and E422.

This sequence belongs to the class-II aminoacyl-tRNA synthetase family. Homodimer. The cofactor is Mg(2+).

The protein resides in the cytoplasm. It carries out the reaction tRNA(Lys) + L-lysine + ATP = L-lysyl-tRNA(Lys) + AMP + diphosphate. This is Lysine--tRNA ligase from Salmonella typhi.